The chain runs to 219 residues: Cytidylate kinase (219 aa).

15–23 (GPAASGKGT) lines the ATP pocket.

It belongs to the cytidylate kinase family. Type 1 subfamily.

The protein resides in the cytoplasm. It carries out the reaction CMP + ATP = CDP + ADP. The enzyme catalyses dCMP + ATP = dCDP + ADP. The chain is Cytidylate kinase from Brucella melitensis biotype 2 (strain ATCC 23457).